Here is a 167-residue protein sequence, read N- to C-terminus: Small ribosomal subunit protein uS5 (167 aa).

The region spanning 12–75 is the S5 DRBM domain; sequence IEDRVVAINR…ETARKSLIEV (64 aa).

This sequence belongs to the universal ribosomal protein uS5 family. As to quaternary structure, part of the 30S ribosomal subunit. Contacts proteins S4 and S8.

Functionally, with S4 and S12 plays an important role in translational accuracy. In terms of biological role, located at the back of the 30S subunit body where it stabilizes the conformation of the head with respect to the body. This is Small ribosomal subunit protein uS5 from Pediococcus pentosaceus (strain ATCC 25745 / CCUG 21536 / LMG 10740 / 183-1w).